A 621-amino-acid chain; its full sequence is NADPH-dependent diflavin oxidoreductase 1 (621 aa).

In terms of domain architecture, Flavodoxin-like spans 6 to 168 (IAVLYGSETG…VYFEFEKRII (163 aa)). Residues 12 to 17 (SETGNA), 59 to 62 (STTG), 106 to 115 (LGDSSYPKFN), and E142 each bind FMN. One can recognise an FAD-binding FR-type domain in the interval 224-489 (KLIKTGTITL…VGPGVGLAPL (266 aa)). FAD-binding positions include R381, 411 to 414 (RLYS), and 443 to 446 (GVCT). Residues 536–537 (SR) and 545–549 (TKYVQ) each bind NADP(+). An FAD-binding site is contributed by W621.

This sequence belongs to the NADPH-dependent diflavin oxidoreductase NDOR1 family. The protein in the N-terminal section; belongs to the flavodoxin family. In the C-terminal section; belongs to the flavoprotein pyridine nucleotide cytochrome reductase family. As to quaternary structure, interacts with DRE2; as part of the cytosolic iron-sulfur (Fe-S) protein assembly (CIA) machinery. The cofactor is FAD. FMN is required as a cofactor.

It is found in the cytoplasm. Its subcellular location is the mitochondrion. It catalyses the reaction 2 oxidized [2Fe-2S]-[protein] + NADPH = 2 reduced [2Fe-2S]-[protein] + NADP(+) + H(+). Its function is as follows. NADPH-dependent reductase which is a central component of the cytosolic iron-sulfur (Fe-S) protein assembly (CIA) machinery. Transfers electrons from NADPH via its FAD and FMN prosthetic groups to the [2Fe-2S] cluster of DRE2, another key component of the CIA machinery. In turn, this reduced cluster provides electrons for assembly of cytosolic iron-sulfur cluster proteins. Positively controls H(2)O(2)-induced cell death. This Candida glabrata (strain ATCC 2001 / BCRC 20586 / JCM 3761 / NBRC 0622 / NRRL Y-65 / CBS 138) (Yeast) protein is NADPH-dependent diflavin oxidoreductase 1.